Consider the following 487-residue polypeptide: Serine/threonine-protein kinase 4 (487 aa).

Met-1 carries the N-acetylmethionine modification. Thr-3 is subject to Phosphothreonine. The region spanning 30–281 (FDVLEKLGEG…ATQLLQHPFV (252 aa)) is the Protein kinase domain. ATP-binding positions include 36 to 44 (LGEGSYGSV) and Lys-59. The active-site Proton acceptor is Asp-149. Thr-183 is subject to Phosphothreonine; by autocatalysis. The residue at position 265 (Ser-265) is a Phosphoserine. Residues 290-310 (LRDLINEAMDVKLKRQESQQR) are a coiled coil. The span at 303–312 (KRQESQQREV) shows a compositional bias: basic and acidic residues. The segment at 303–332 (KRQESQQREVDQDDEENSEEDEMDSGTMVR) is disordered. Over residues 313–326 (DQDDEENSEEDEMD) the composition is skewed to acidic residues. The residue at position 320 (Ser-320) is a Phosphoserine. Phosphothreonine is present on residues Thr-340 and Thr-367. Position 387 is a phosphothreonine; by PKB/AKT1 (Thr-387). Phosphoserine occurs at positions 410 and 414. Phosphotyrosine is present on Tyr-433. In terms of domain architecture, SARAH spans 433 to 480 (YEFLKSWTVEDLQKRLLALDPMMEQEIEEIRQKYQSKRQPILDAIEAK).

This sequence belongs to the protein kinase superfamily. STE Ser/Thr protein kinase family. STE20 subfamily. Homodimer; mediated via the coiled-coil region. Interacts with NORE1, which inhibits autoactivation. Interacts with and stabilizes SAV1. Interacts with RASSF1. Interacts with FOXO3. Interacts with RASSF2 (via SARAH domain). Interacts with AR, PKB/AKT1, TNNI3 and SIRT1. Interacts with DLG5 (via PDZ domain 3). Interacts with MARK3 in the presence of DLG5. Interacts with SCRIB in the presence of DLG5. Mg(2+) serves as cofactor. In terms of processing, autophosphorylated on serine and threonine residues. Phosphorylation at Thr-387 by PKB/AKT1, leads to inhibition of its: kinase activity, nuclear translocation and autophosphorylation at Thr-183. It also diminishes its cleavage by caspases and its ability to phosphorylate FOXO3. Post-translationally, proteolytically cleaved by caspase-3 during apoptosis at Asp-326 and Asp-349 resulting in a 37 kDa or a 39 kDa subunit respectively. The 39 kDa subunit is further cleaved into the 37 kDa form. Proteolytic cleavage results in kinase activation and nuclear translocation of the truncated form (MST1/N). It is less likely that cleavage at Asp-349 is a prerequisite for activation as this site is not conserved in the murine ortholog. As to expression, expressed in prostate cancer and levels increase from the normal to the malignant state (at protein level). Ubiquitously expressed.

The protein localises to the cytoplasm. It localises to the nucleus. It catalyses the reaction L-seryl-[protein] + ATP = O-phospho-L-seryl-[protein] + ADP + H(+). The catalysed reaction is L-threonyl-[protein] + ATP = O-phospho-L-threonyl-[protein] + ADP + H(+). Its activity is regulated as follows. Inhibited by the C-terminal non-catalytic region. Activated by caspase-cleavage. Full activation also requires homodimerization and autophosphorylation of Thr-183. Activated by RASSF1 which acts by preventing its dephosphorylation. In terms of biological role, stress-activated, pro-apoptotic kinase which, following caspase-cleavage, enters the nucleus and induces chromatin condensation followed by internucleosomal DNA fragmentation. Key component of the Hippo signaling pathway which plays a pivotal role in organ size control and tumor suppression by restricting proliferation and promoting apoptosis. The core of this pathway is composed of a kinase cascade wherein STK3/MST2 and STK4/MST1, in complex with its regulatory protein SAV1, phosphorylates and activates LATS1/2 in complex with its regulatory protein MOB1, which in turn phosphorylates and inactivates YAP1 oncoprotein and WWTR1/TAZ. Phosphorylation of YAP1 by LATS2 inhibits its translocation into the nucleus to regulate cellular genes important for cell proliferation, cell death, and cell migration. STK3/MST2 and STK4/MST1 are required to repress proliferation of mature hepatocytes, to prevent activation of facultative adult liver stem cells (oval cells), and to inhibit tumor formation. Phosphorylates 'Ser-14' of histone H2B (H2BS14ph) during apoptosis. Phosphorylates FOXO3 upon oxidative stress, which results in its nuclear translocation and cell death initiation. Phosphorylates MOBKL1A, MOBKL1B and RASSF2. Phosphorylates TNNI3 (cardiac Tn-I) and alters its binding affinity to TNNC1 (cardiac Tn-C) and TNNT2 (cardiac Tn-T). Phosphorylates FOXO1 on 'Ser-212' and regulates its activation and stimulates transcription of PMAIP1 in a FOXO1-dependent manner. Phosphorylates SIRT1 and inhibits SIRT1-mediated p53/TP53 deacetylation, thereby promoting p53/TP53 dependent transcription and apoptosis upon DNA damage. Acts as an inhibitor of PKB/AKT1. Phosphorylates AR on 'Ser-650' and suppresses its activity by intersecting with PKB/AKT1 signaling and antagonizing formation of AR-chromatin complexes. This chain is Serine/threonine-protein kinase 4, found in Homo sapiens (Human).